We begin with the raw amino-acid sequence, 153 residues long: Histone H2B.3 (153 aa).

Basic and acidic residues predominate over residues 1–28 (MAPKADKKPAAKKPAEEEPATEKAEKAP). The disordered stretch occupies residues 1 to 60 (MAPKADKKPAAKKPAEEEPATEKAEKAPAGKKPKAEKRLPAGKSAGKEGGEGKKGKKKAK). N6-acetyllysine occurs at positions 7 and 37. Lys-149 participates in a covalent cross-link: Glycyl lysine isopeptide (Lys-Gly) (interchain with G-Cter in ubiquitin).

It belongs to the histone H2B family. The nucleosome is a histone octamer containing two molecules each of H2A, H2B, H3 and H4 assembled in one H3-H4 heterotetramer and two H2A-H2B heterodimers. The octamer wraps approximately 147 bp of DNA. In terms of processing, can be acetylated to form H2BK6ac and H2BK33ac. Post-translationally, monoubiquitinated to form H2BK143ub1; may give a specific tag for epigenetic transcriptional activation.

The protein localises to the nucleus. It is found in the chromosome. Its function is as follows. Core component of nucleosome. Nucleosomes wrap and compact DNA into chromatin, limiting DNA accessibility to the cellular machineries which require DNA as a template. Histones thereby play a central role in transcription regulation, DNA repair, DNA replication and chromosomal stability. DNA accessibility is regulated via a complex set of post-translational modifications of histones, also called histone code, and nucleosome remodeling. The sequence is that of Histone H2B.3 from Zea mays (Maize).